A 668-amino-acid polypeptide reads, in one-letter code: 1-deoxy-D-xylulose-5-phosphate synthase (668 aa).

Thiamine diphosphate-binding positions include H105 and 146-148 (AHS). D177 serves as a coordination point for Mg(2+). Residues 178 to 179 (GA), N206, Y316, and E398 each bind thiamine diphosphate. Position 206 (N206) interacts with Mg(2+).

It belongs to the transketolase family. DXPS subfamily. Homodimer. Mg(2+) serves as cofactor. The cofactor is thiamine diphosphate.

The catalysed reaction is D-glyceraldehyde 3-phosphate + pyruvate + H(+) = 1-deoxy-D-xylulose 5-phosphate + CO2. It functions in the pathway metabolic intermediate biosynthesis; 1-deoxy-D-xylulose 5-phosphate biosynthesis; 1-deoxy-D-xylulose 5-phosphate from D-glyceraldehyde 3-phosphate and pyruvate: step 1/1. Catalyzes the acyloin condensation reaction between C atoms 2 and 3 of pyruvate and glyceraldehyde 3-phosphate to yield 1-deoxy-D-xylulose-5-phosphate (DXP). In Nitrobacter hamburgensis (strain DSM 10229 / NCIMB 13809 / X14), this protein is 1-deoxy-D-xylulose-5-phosphate synthase.